The sequence spans 317 residues: Pantothenate kinase (317 aa).

Position 99–106 (99–106) interacts with ATP; the sequence is GSVSVGKS.

It belongs to the prokaryotic pantothenate kinase family.

The protein localises to the cytoplasm. It catalyses the reaction (R)-pantothenate + ATP = (R)-4'-phosphopantothenate + ADP + H(+). It functions in the pathway cofactor biosynthesis; coenzyme A biosynthesis; CoA from (R)-pantothenate: step 1/5. The protein is Pantothenate kinase of Histophilus somni (strain 129Pt) (Haemophilus somnus).